Reading from the N-terminus, the 228-residue chain is MTDHTLADADEGFDLDSVEIRVLGVLMEKAFVTPDNYPLSVNAIVTGSNQLTGRDPVMNLTETEVQEALDRLIARKLVSKRDQASARVGKYEHLVRLRHSLPPPEQAALATLMLRGAQTAGEIRQRSERMHRFDDIAAVDKVLEHLGEKYPPMVAAVPKAPGTKETRYAHLLGGRQAFVQMGEAVASGYGSGGAVRGRTSELEEEVRRLRDEFDVLRSEFEKFRSQFE.

It belongs to the UPF0502 family.

This chain is UPF0502 protein AZOSEA09860, found in Aromatoleum aromaticum (strain DSM 19018 / LMG 30748 / EbN1) (Azoarcus sp. (strain EbN1)).